The sequence spans 245 residues: Probable phosphatase NT01EI_1577 (245 aa).

The Zn(2+) site is built by histidine 7, histidine 9, histidine 15, histidine 40, glutamate 73, histidine 101, histidine 131, aspartate 192, and histidine 194.

Belongs to the PHP family. Homotrimer. It depends on Zn(2+) as a cofactor.

This chain is Probable phosphatase NT01EI_1577, found in Edwardsiella ictaluri (strain 93-146).